Reading from the N-terminus, the 399-residue chain is MSLQYGAEETPLAGSYGAADSFPKDFGYGVEEEEEEAAAAGGGVGAGAGGGCGPGGADSSKPRILLMGLRRSGKSSIQKVVFHKMSPNETLFLESTNKIYKDDISNSSFVNFQIWDFPGQMDFFDPTFDYEMIFRGTGALIYVIDAQDDYMEALTRLHITVSKAYKVNPDMNFEVFIHKVDGLSDDHKIETQRDIHQRANDDLADAGLEKLHLSFYLTSIYDHSIFEAFSKVVQKLIPQLPTLENLLNIFISNSGIEKAFLFDVVSKIYIATDSSPVDMQSYELCCDMIDVVIDVSCIYGLKEDGSGSAYDKESMAIIKLNNTTVLYLKEVTKFLALVCILREESFERKGLIDYNFHCFRKAIHEVFEVGVTSHRSCGHQTSASSLKALTHNGTPRNAI.

The tract at residues methionine 1 to aspartate 20 is disordered. Serine 2 carries the N-acetylserine modification. Residues serine 2 and serine 15 each carry the phosphoserine modification. Arginine 71, serine 72, glycine 73, lysine 74, serine 75, serine 76, threonine 90, glutamate 94, threonine 96, histidine 178, lysine 179, aspartate 181, serine 219, and isoleucine 220 together coordinate GDP. Lysine 74 is a binding site for GTP. Threonine 90 is a GTP binding site. Threonine 96 is a GTP binding site. At threonine 96 the chain carries Phosphothreonine. A GTP-binding site is contributed by aspartate 181.

This sequence belongs to the GTR/RAG GTP-binding protein family. Forms a heterodimer with RRAGA, in a sequence-independent manner, and RRAGB. Heterodimerization stabilizes proteins of the heterodimer. The GDP-bound form of RRAGC (in complex with the GTP-bound form of RRAGA or RRAGB), interacts with RPTOR, thereby promoting recruitment of mTORC1 to the lysosomes. Component of the lysosomal folliculin complex (LFC), composed of FLCN, FNIP1 (or FNIP2), RagA/RRAGA or RagB/RRAGB GDP-bound, RagC/RRAGC or RagD/RRAGD GTP-bound, and Ragulator. Interacts with NOL8. Interacts with SH3BP4; the interaction with this negative regulator is most probably direct, preferentially occurs with the inactive GDP-bound form of RRAGB, is negatively regulated by amino acids and prevents interaction with RPTOR. The Rag heterodimer interacts with SLC38A9; the probable amino acid sensor. Interacts with SESN1, SESN2 and SESN3. Interacts with PIP4P1. The Rag heterodimer interacts with the Ragulator complex. The GDP-bound form interacts with TFEB. The GDP-bound form interacts with TFE3.

The protein localises to the cytoplasm. Its subcellular location is the nucleus. The protein resides in the lysosome membrane. The catalysed reaction is GTP + H2O = GDP + phosphate + H(+). Its activity is regulated as follows. The activation of RagC/RRAGC is mediated by a GTPase activating protein (GAP). In high-amino acid conditions, activated by GTPase activating protein FLCN that stimulates RRAGC GTPase activity to turn it into its active GDP-bound form. In response to amino acid depletion, the GATOR1 complex inactivates RagC/RRAGC by securing the GTP-bound inactive form. Functionally, guanine nucleotide-binding protein that plays a crucial role in the cellular response to amino acid availability through regulation of the mTORC1 signaling cascade. Forms heterodimeric Rag complexes with RagA/RRAGA or RagB/RRAGB and cycles between an inactive GTP-bound and an active GDP-bound form: RagC/RRAGC is in its active form when GDP-bound RagC/RRAGC forms a complex with GTP-bound RagA/RRAGA (or RagB/RRAGB) and in an inactive form when GTP-bound RagC/RRAGC heterodimerizes with GDP-bound RagA/RRAGA (or RagB/RRAGB). In its GDP-bound active form, promotes the recruitment of mTORC1 to the lysosomes and its subsequent activation by the GTPase RHEB. This is a crucial step in the activation of the MTOR signaling cascade by amino acids. Also plays a central role in the non-canonical mTORC1 complex, which acts independently of RHEB and specifically mediates phosphorylation of MiT/TFE factors TFEB and TFE3: GDP-bound RagC/RRAGC mediates recruitment of MiT/TFE factors TFEB and TFE3. This chain is Ras-related GTP-binding protein C, found in Homo sapiens (Human).